The following is a 258-amino-acid chain: Snake venom serine protease 2 (258 aa).

The first 18 residues, 1-18, serve as a signal peptide directing secretion; the sequence is MVLIRVLANLLILQLSYA. Residues 19–24 constitute a propeptide that is removed on maturation; the sequence is QKSSEL. The Peptidase S1 domain occupies 25 to 249; that stretch reads VFGGRPCNIN…YNDWVQSIIA (225 aa). 6 disulfide bridges follow: Cys-31-Cys-163, Cys-50-Cys-66, Cys-98-Cys-256, Cys-142-Cys-210, Cys-174-Cys-189, and Cys-200-Cys-225. N-linked (GlcNAc...) asparagine glycosylation occurs at Asn-44. Catalysis depends on charge relay system residues His-65 and Asp-110. 2 N-linked (GlcNAc...) asparagine glycosylation sites follow: Asn-122 and Asn-185. Residue Ser-204 is the Charge relay system of the active site.

The protein belongs to the peptidase S1 family. Snake venom subfamily. Monomer. Expressed by the venom gland.

Its subcellular location is the secreted. With respect to regulation, inhibited by PMSF at 2 mM concentration but not by EDTA. Snake venom serine protease that may act in the hemostasis system of the prey. Has weak fibrinogen clotting activity. Possesses amidolysis activity towards S-2251 (substrate for plasmin) but has no hydrolytic activity with S-2302 (plasma kallikrein substrate) or S-2238 (thrombin substrate). This Protobothrops jerdonii (Jerdon's pitviper) protein is Snake venom serine protease 2.